We begin with the raw amino-acid sequence, 472 residues long: Divalent metal cation transporter MntH (472 aa).

11 consecutive transmembrane segments (helical) span residues 59–79 (LLAF…PGNW), 92–112 (MLLS…ALAA), 136–156 (LALW…EVIG), 167–187 (VPII…LLLM), 196–216 (AFVI…IVLA), 233–253 (VVAD…TVMP), 288–308 (LALM…AAVF), 325–345 (LLAP…ALLA), 377–397 (VLTR…YGEQ), 402–422 (LLLL…IPLL), and 439–459 (WLMV…VKLL).

This sequence belongs to the NRAMP family.

The protein resides in the cell inner membrane. In terms of biological role, h(+)-stimulated, divalent metal cation uptake system. The protein is Divalent metal cation transporter MntH of Xylella fastidiosa (strain 9a5c).